A 54-amino-acid polypeptide reads, in one-letter code: Pars intercerebralis major peptide D1 (54 aa).

This sequence belongs to the granulin family. In terms of processing, six disulfide bonds are present. As to expression, brain.

Its subcellular location is the secreted. The protein is Pars intercerebralis major peptide D1 of Locusta migratoria (Migratory locust).